Reading from the N-terminus, the 60-residue chain is UPF0434 protein Mfla_2088 (60 aa).

Belongs to the UPF0434 family.

This chain is UPF0434 protein Mfla_2088, found in Methylobacillus flagellatus (strain ATCC 51484 / DSM 6875 / VKM B-1610 / KT).